We begin with the raw amino-acid sequence, 385 residues long: Bifunctional chorismate mutase/prephenate dehydratase (385 aa).

One can recognise a Chorismate mutase domain in the interval 1–92; sequence MPSKNDLLSF…ESVLTQKKLL (92 aa). Substrate is bound by residues R11, R28, K39, D48, E52, S84, and Q88. Residues 105–285 enclose the Prephenate dehydratase domain; it reads SFSFLGPKGS…NITRFILLSR (181 aa). Positions 286–385 are regulatory; it reads KPVSISSKIP…PSENITPIIP (100 aa). The ACT domain maps to 299–376; that stretch reads TLIFNTGQES…KFIKILGCYP (78 aa).

The protein resides in the cytoplasm. The catalysed reaction is chorismate = prephenate. The enzyme catalyses prephenate + H(+) = 3-phenylpyruvate + CO2 + H2O. The protein operates within amino-acid biosynthesis; L-phenylalanine biosynthesis; phenylpyruvate from prephenate: step 1/1. It participates in metabolic intermediate biosynthesis; prephenate biosynthesis; prephenate from chorismate: step 1/1. Its function is as follows. Catalyzes the Claisen rearrangement of chorismate to prephenate and the decarboxylation/dehydration of prephenate to phenylpyruvate. The polypeptide is Bifunctional chorismate mutase/prephenate dehydratase (pheA) (Buchnera aphidicola subsp. Schizaphis graminum (strain Sg)).